Reading from the N-terminus, the 244-residue chain is Haloacid dehalogenase-like hydrolase domain-containing protein Sgpp (244 aa).

D28 functions as the Nucleophile in the catalytic mechanism. Positions 28, 30, and 189 each coordinate Mg(2+). D30 functions as the Proton donor in the catalytic mechanism.

This sequence belongs to the HAD-like hydrolase superfamily. DOG/GPP family. The cofactor is Mg(2+). In terms of tissue distribution, ubiquitous with highest expression in flowers.

In terms of biological role, acts as a phosphosugar phosphatase on a broad range of sugar phosphate substrates with preferential activity on D-ribose-5-phosphate, 2-deoxy-D-ribose-5-phosphate, 2-deoxy-D-glucose-6-phosphate, and D-mannose-6-phosphate and with a lower activity on D-fructose-1-phosphate, D-glucose-6-phosphate, DL-glycerol-3-phosphate, and D-fructose-6-phosphate. The protein is Haloacid dehalogenase-like hydrolase domain-containing protein Sgpp (SGPP) of Arabidopsis thaliana (Mouse-ear cress).